Reading from the N-terminus, the 326-residue chain is uncharacterized protein (326 aa).

Solcar repeat units follow at residues 15–106 (EFLV…VRRV), 114–215 (ETHA…ATDF), and 234–322 (LKTW…SKAL). 6 helical membrane-spanning segments follow: residues 16 to 36 (FLVK…SVVA), 83 to 103 (TATL…YEQV), 120 to 140 (FLSG…LELI), 191 to 211 (FSVT…AYDL), 240 to 260 (LLCG…FEVC), and 294 to 314 (FFVG…TSFF).

This sequence belongs to the mitochondrial carrier (TC 2.A.29) family.

It localises to the mitochondrion inner membrane. This is an uncharacterized protein from Schizosaccharomyces pombe (strain 972 / ATCC 24843) (Fission yeast).